An 84-amino-acid polypeptide reads, in one-letter code: Small ribosomal subunit protein uS17 (84 aa).

The protein belongs to the universal ribosomal protein uS17 family. Part of the 30S ribosomal subunit.

In terms of biological role, one of the primary rRNA binding proteins, it binds specifically to the 5'-end of 16S ribosomal RNA. The polypeptide is Small ribosomal subunit protein uS17 (Photobacterium profundum (strain SS9)).